The primary structure comprises 175 residues: Large ribosomal subunit protein uL10 (175 aa).

It belongs to the universal ribosomal protein uL10 family. As to quaternary structure, part of the ribosomal stalk of the 50S ribosomal subunit. The N-terminus interacts with L11 and the large rRNA to form the base of the stalk. The C-terminus forms an elongated spine to which L12 dimers bind in a sequential fashion forming a multimeric L10(L12)X complex.

Forms part of the ribosomal stalk, playing a central role in the interaction of the ribosome with GTP-bound translation factors. This Thermobifida fusca (strain YX) protein is Large ribosomal subunit protein uL10.